We begin with the raw amino-acid sequence, 449 residues long: Tubulin alpha chain (449 aa).

The short motif at 1–4 (MREC) is the MREC motif element. Q11 is a binding site for GTP. Position 40 is an N6-acetyllysine (K40). The GTP site is built by E71, S140, G144, T145, T179, N206, and N228. E71 provides a ligand contact to Mg(2+). The active site involves E254. 5-glutamyl polyglutamate is present on E443.

This sequence belongs to the tubulin family. As to quaternary structure, dimer of alpha and beta chains. A typical microtubule is a hollow water-filled tube with an outer diameter of 25 nm and an inner diameter of 15 nM. Alpha-beta heterodimers associate head-to-tail to form protofilaments running lengthwise along the microtubule wall with the beta-tubulin subunit facing the microtubule plus end conferring a structural polarity. Microtubules usually have 13 protofilaments but different protofilament numbers can be found in some organisms and specialized cells. The cofactor is Mg(2+). Some glutamate residues at the C-terminus are polyglycylated, resulting in polyglycine chains on the gamma-carboxyl group. Glycylation is mainly limited to tubulin incorporated into axonemes (cilia and flagella) whereas glutamylation is prevalent in neuronal cells, centrioles, axonemes, and the mitotic spindle. Both modifications can coexist on the same protein on adjacent residues, and lowering polyglycylation levels increases polyglutamylation, and reciprocally. The precise function of polyglycylation is still unclear. Post-translationally, some glutamate residues at the C-terminus are polyglutamylated, resulting in polyglutamate chains on the gamma-carboxyl group. Polyglutamylation plays a key role in microtubule severing by spastin (SPAST). SPAST preferentially recognizes and acts on microtubules decorated with short polyglutamate tails: severing activity by SPAST increases as the number of glutamates per tubulin rises from one to eight, but decreases beyond this glutamylation threshold. In terms of processing, acetylation of alpha chains at Lys-40 is located inside the microtubule lumen. This modification has been correlated with increased microtubule stability, intracellular transport and ciliary assembly. Undergoes a tyrosination/detyrosination cycle, the cyclic removal and re-addition of a C-terminal tyrosine residue by the enzymes tubulin tyrosine carboxypeptidase (MATCAP1, VASH1 or VASH2) and tubulin tyrosine ligase (TTL), respectively. Post-translationally, tyrosination promotes microtubule interaction with CAP-Gly microtubule plus-end tracking proteins. Tyrosinated tubulins regulate the initiation of dynein-driven motility. In terms of processing, detyrosination is involved in metaphase plate congression by guiding chromosomes during mitosis. Detyrosination increases microtubules-dependent mechanotransduction in dystrophic cardiac and skeletal muscle. In cardiomyocytes, detyrosinated microtubules are required to resist to contractile compression during contraction.

It localises to the cytoplasm. The protein localises to the cytoskeleton. The enzyme catalyses GTP + H2O = GDP + phosphate + H(+). In terms of biological role, tubulin is the major constituent of microtubules, a cylinder consisting of laterally associated linear protofilaments composed of alpha- and beta-tubulin heterodimers. Microtubules grow by the addition of GTP-tubulin dimers to the microtubule end, where a stabilizing cap forms. Below the cap, tubulin dimers are in GDP-bound state, owing to GTPase activity of alpha-tubulin. The sequence is that of Tubulin alpha chain (tuba) from Xenopus tropicalis (Western clawed frog).